The sequence spans 531 residues: Histone-arginine methyltransferase CARMER (531 aa).

Residues 141–450 form the SAM-dependent MTase PRMT-type domain; it reads ASQYFQFYGY…QSYDVTIDLH (310 aa). 6 residues coordinate S-adenosyl-L-methionine: glutamine 154, arginine 163, glycine 187, glutamate 209, glutamate 238, and threonine 266. Arginine 501 bears the Asymmetric dimethylarginine; by autocatalysis mark.

The protein belongs to the class I-like SAM-binding methyltransferase superfamily. Protein arginine N-methyltransferase family. Homodimer. The dimethylated protein is the major form.

The protein resides in the cytoplasm. It is found in the nucleus. The catalysed reaction is L-arginyl-[protein] + 2 S-adenosyl-L-methionine = N(omega),N(omega)-dimethyl-L-arginyl-[protein] + 2 S-adenosyl-L-homocysteine + 2 H(+). Its function is as follows. Methylates (mono- and asymmetric dimethylation) the guanidino nitrogens of arginyl residues in proteins. May methylate histone H3 at 'Arg-17' and activate transcription via chromatin remodeling. The polypeptide is Histone-arginine methyltransferase CARMER (Art4) (Drosophila persimilis (Fruit fly)).